A 182-amino-acid polypeptide reads, in one-letter code: MKVSADTPGHDDPGPGRRLGLDVGTVRIGVAASDRDAKLAMPVETVPRETGFKGPDLADIDRLVAIVEEYNAVEVIVGLPTDLQGNGSASVKHAKEIAFRVRRRLTNAGKNIPVRLGDERLTTVVATQALRASGVSEKAGRKVIDQAAAVEILQTWLDARTRALEPQSTDTQDFDEKGNFPG.

Belongs to the YqgF nuclease family.

The protein resides in the cytoplasm. Its function is as follows. Could be a nuclease involved in processing of the 5'-end of pre-16S rRNA. This is Putative pre-16S rRNA nuclease from Corynebacterium glutamicum (strain ATCC 13032 / DSM 20300 / JCM 1318 / BCRC 11384 / CCUG 27702 / LMG 3730 / NBRC 12168 / NCIMB 10025 / NRRL B-2784 / 534).